Reading from the N-terminus, the 372-residue chain is C-X-C chemokine receptor type 5 (372 aa).

At 1 to 55 the chain is on the extracellular side; it reads MNYPLTLEMDLENLEDLFWELDRLDNYNDTSLVENHLCPATEGPLMASFKAVFVP. The N-linked (GlcNAc...) asparagine glycan is linked to asparagine 28. The helical transmembrane segment at 56-76 threads the bilayer; it reads VAYSLIFLLGVIGNVLVLVIL. Topologically, residues 77–88 are cytoplasmic; the sequence is ERHRQTRSSTET. A helical membrane pass occupies residues 89-109; it reads FLFHLAVADLLLVFILPFAVA. The Extracellular segment spans residues 110–124; that stretch reads EGSVGWVLGTFLCKT. A disulfide bridge connects residues cysteine 122 and cysteine 202. The chain crosses the membrane as a helical span at residues 125 to 145; sequence VIALHKVNFYCSSLLLACIAV. Residues 146 to 167 lie on the Cytoplasmic side of the membrane; it reads DRYLAIVHAVHAYRHRRLLSIH. A helical membrane pass occupies residues 168 to 188; that stretch reads ITCGTIWLVGFLLALPEILFA. At 189-219 the chain is on the extracellular side; sequence KVSQGHHNNSLPRCTFSQENQAETHAWFTSR. The N-linked (GlcNAc...) asparagine glycan is linked to asparagine 196. Residues 220–240 form a helical membrane-spanning segment; the sequence is FLYHVAGFLLPMLVMGWCYVG. The Cytoplasmic portion of the chain corresponds to 241-259; it reads VVHRLRQAQRRPQRQKAVR. A helical transmembrane segment spans residues 260–280; sequence VAILVTSIFFLCWSPYHIVIF. At 281-304 the chain is on the extracellular side; the sequence is LDTLARLKAVDNTCKLNGSLPVAI. Residues 305 to 325 traverse the membrane as a helical segment; sequence TMCEFLGLAHCCLNPMLYTFA. Residues 326–372 lie on the Cytoplasmic side of the membrane; it reads GVKFRSDLSRLLTKLGCTGPASLCQLFPSWRRSSLSESENATSLTTF.

Belongs to the G-protein coupled receptor 1 family. In terms of tissue distribution, expression in mature B-cells and Burkitt lymphoma cells.

It is found in the cell membrane. Its function is as follows. Cytokine receptor that binds to B-lymphocyte chemoattractant (BLC). Involved in B-cell migration into B-cell follicles of spleen and Peyer patches but not into those of mesenteric or peripheral lymph nodes. May have a regulatory function in Burkitt lymphoma (BL) lymphomagenesis and/or B-cell differentiation. This chain is C-X-C chemokine receptor type 5 (CXCR5), found in Homo sapiens (Human).